The chain runs to 549 residues: Sorting nexin-33 (549 aa).

The SH3 domain occupies 1–61 (MALKARALYS…PASYVEILRP (61 aa)). The segment covering 66–83 (VQVDYSGHTQGYTDSPHQ) has biased composition (polar residues). The disordered stretch occupies residues 66 to 137 (VQVDYSGHTQ…RPEYTHRPRP (72 aa)). Residues 86–101 (YDDDEEDDDDWDDWDD) show a composition bias toward acidic residues. The span at 110–119 (SGSNGVSRSQ) shows a compositional bias: polar residues. Over residues 127–137 (PRPEYTHRPRP) the composition is skewed to basic and acidic residues. A PX domain is found at 205–315 (FSCSVEEPTK…HFLSCQDEKQ (111 aa)). The BAR domain maps to 346-549 (LQDVEERVDV…EKTLHMYDDL (204 aa)).

It belongs to the sorting nexin family.

It localises to the cytoplasm. The protein resides in the cytosol. The protein localises to the membrane. Its subcellular location is the cytoplasmic vesicle membrane. Its function is as follows. Plays a role in the reorganization of the cytoskeleton, endocytosis and cellular vesicle trafficking, both during interphase and at the end of mitotic cell divisions. Required for efficient progress through mitosis and cytokinesis. Required for normal formation of the cleavage furrow at the end of mitosis. Modulates endocytosis of cell-surface proteins. Promotes membrane tubulation (in vitro). May promote the formation of macropinosomes. The polypeptide is Sorting nexin-33 (snx33) (Xenopus tropicalis (Western clawed frog)).